The following is a 212-amino-acid chain: Imidazole glycerol phosphate synthase subunit HisH (212 aa).

The Glutamine amidotransferase type-1 domain maps to 1–212 (MLAILDYKAG…YEYCKEVSDA (212 aa)). The active-site Nucleophile is Cys-79. Residues His-187 and Glu-189 contribute to the active site.

As to quaternary structure, heterodimer of HisH and HisF.

The protein resides in the cytoplasm. It catalyses the reaction 5-[(5-phospho-1-deoxy-D-ribulos-1-ylimino)methylamino]-1-(5-phospho-beta-D-ribosyl)imidazole-4-carboxamide + L-glutamine = D-erythro-1-(imidazol-4-yl)glycerol 3-phosphate + 5-amino-1-(5-phospho-beta-D-ribosyl)imidazole-4-carboxamide + L-glutamate + H(+). The enzyme catalyses L-glutamine + H2O = L-glutamate + NH4(+). It participates in amino-acid biosynthesis; L-histidine biosynthesis; L-histidine from 5-phospho-alpha-D-ribose 1-diphosphate: step 5/9. IGPS catalyzes the conversion of PRFAR and glutamine to IGP, AICAR and glutamate. The HisH subunit catalyzes the hydrolysis of glutamine to glutamate and ammonia as part of the synthesis of IGP and AICAR. The resulting ammonia molecule is channeled to the active site of HisF. This is Imidazole glycerol phosphate synthase subunit HisH from Maridesulfovibrio salexigens (strain ATCC 14822 / DSM 2638 / NCIMB 8403 / VKM B-1763) (Desulfovibrio salexigens).